The following is a 473-amino-acid chain: UTP--glucose-1-phosphate uridylyltransferase (473 aa).

UTP is bound by residues 89–92, Lys-103, Gln-166, and Gly-195; that span reads LNGG. 91-92 lines the substrate pocket; the sequence is GG. Residues His-196 and 224–226 contribute to the substrate site; that span reads NSD. Asp-226 and Lys-364 together coordinate UTP.

This sequence belongs to the UDPGP type 1 family.

It localises to the cytoplasm. The enzyme catalyses alpha-D-glucose 1-phosphate + UTP + H(+) = UDP-alpha-D-glucose + diphosphate. Its function is as follows. Plays a central role as a glucosyl donor in cellular metabolic pathways. The chain is UTP--glucose-1-phosphate uridylyltransferase from Hordeum vulgare (Barley).